Consider the following 56-residue polypeptide: Large ribosomal subunit protein bL32 (56 aa).

The interval methionine 1–histidine 37 is disordered. Positions lysine 7–arginine 16 are enriched in basic residues.

The protein belongs to the bacterial ribosomal protein bL32 family.

The sequence is that of Large ribosomal subunit protein bL32 (rpmF) from Pasteurella multocida (strain Pm70).